The following is a 322-amino-acid chain: Quinolinate synthase (322 aa).

2 residues coordinate iminosuccinate: His37 and Ser54. Cys99 contacts [4Fe-4S] cluster. Residues 125–127 (YIN) and Ser142 each bind iminosuccinate. Cys185 serves as a coordination point for [4Fe-4S] cluster. Residues 211 to 213 (HPE) and Thr228 each bind iminosuccinate. Cys278 serves as a coordination point for [4Fe-4S] cluster.

This sequence belongs to the quinolinate synthase family. Type 2 subfamily. [4Fe-4S] cluster serves as cofactor.

The protein localises to the cytoplasm. The catalysed reaction is iminosuccinate + dihydroxyacetone phosphate = quinolinate + phosphate + 2 H2O + H(+). It functions in the pathway cofactor biosynthesis; NAD(+) biosynthesis; quinolinate from iminoaspartate: step 1/1. Functionally, catalyzes the condensation of iminoaspartate with dihydroxyacetone phosphate to form quinolinate. This chain is Quinolinate synthase, found in Chlorobaculum parvum (strain DSM 263 / NCIMB 8327) (Chlorobium vibrioforme subsp. thiosulfatophilum).